A 1097-amino-acid polypeptide reads, in one-letter code: DNA-directed RNA polymerase subunit beta (1097 aa).

The disordered stretch occupies residues 1072-1097 (QDVNPRRSTPSRPTYESLGVADYDED).

It belongs to the RNA polymerase beta chain family. As to quaternary structure, in cyanobacteria the RNAP catalytic core is composed of 2 alpha, 1 beta, 1 beta', 1 gamma and 1 omega subunit. When a sigma factor is associated with the core the holoenzyme is formed, which can initiate transcription.

The catalysed reaction is RNA(n) + a ribonucleoside 5'-triphosphate = RNA(n+1) + diphosphate. Functionally, DNA-dependent RNA polymerase catalyzes the transcription of DNA into RNA using the four ribonucleoside triphosphates as substrates. In Parasynechococcus marenigrum (strain WH8102), this protein is DNA-directed RNA polymerase subunit beta.